The sequence spans 126 residues: Glycine cleavage system H protein (126 aa).

One can recognise a Lipoyl-binding domain in the interval 22 to 104; that stretch reads TVTIGVTDFA…YGEGWMIKIK (83 aa). Lysine 63 carries the N6-lipoyllysine modification.

It belongs to the GcvH family. In terms of assembly, the glycine cleavage system is composed of four proteins: P, T, L and H. Requires (R)-lipoate as cofactor.

In terms of biological role, the glycine cleavage system catalyzes the degradation of glycine. The H protein shuttles the methylamine group of glycine from the P protein to the T protein. This chain is Glycine cleavage system H protein, found in Christiangramia forsetii (strain DSM 17595 / CGMCC 1.15422 / KT0803) (Gramella forsetii).